A 478-amino-acid polypeptide reads, in one-letter code: Microfibrillar-associated protein 1 (478 aa).

Low complexity predominate over residues 1–20; that stretch reads MSAATAAAAASGIQSTAGAI. Disordered stretches follow at residues 1–276 and 456–478; these read MSAA…RRAT and NEHA…KKME. The span at 53-62 shows a compositional bias: acidic residues; sequence SSEESDDDDF. Residues 107-128 show a composition bias toward basic and acidic residues; it reads DDPRLRRLRQRPVDMEDMERER. The span at 140–153 shows a compositional bias: acidic residues; sequence IMESDSEDEEEDEG. The segment covering 160–170 has biased composition (polar residues); it reads RGTNKITLASE. The segment covering 171–181 has biased composition (acidic residues); sequence SDTDAELSDTE. A compositionally biased stretch (basic and acidic residues) spans 197–212; that stretch reads QREEEVLQKEDEKQSE. A compositionally biased stretch (acidic residues) spans 214 to 231; it reads SESESSEYEEETESEEDN. The interaction with Prp38 stretch occupies residues 229-478; the sequence is EDNEPRLKPL…PTGSKRKKME (250 aa). Over residues 245–268 the composition is skewed to basic and acidic residues; that stretch reads RATIQEKEREAQKQKQLEAEAKRA.

Belongs to the MFAP1 family. As to quaternary structure, component of the spliceosome B complex. Interacts (via C-terminus) with Prp38.

The protein localises to the nucleus. Required for pre-mRNA splicing. This is Microfibrillar-associated protein 1 from Drosophila melanogaster (Fruit fly).